The sequence spans 416 residues: S-adenosylmethionine synthase (416 aa).

An ATP-binding site is contributed by H16. D18 lines the Mg(2+) pocket. E44 contributes to the K(+) binding site. Residues E57 and Q100 each contribute to the L-methionine site. The segment at 100 to 110 (QSPDISQGVTA) is flexible loop. ATP-binding positions include 175-177 (DGK), 251-252 (KF), D260, 266-267 (RK), A283, and K287. Residue D260 coordinates L-methionine. K291 is a binding site for L-methionine.

The protein belongs to the AdoMet synthase family. Homotetramer; dimer of dimers. Mg(2+) serves as cofactor. Requires K(+) as cofactor.

It localises to the cytoplasm. It catalyses the reaction L-methionine + ATP + H2O = S-adenosyl-L-methionine + phosphate + diphosphate. The protein operates within amino-acid biosynthesis; S-adenosyl-L-methionine biosynthesis; S-adenosyl-L-methionine from L-methionine: step 1/1. Catalyzes the formation of S-adenosylmethionine (AdoMet) from methionine and ATP. The overall synthetic reaction is composed of two sequential steps, AdoMet formation and the subsequent tripolyphosphate hydrolysis which occurs prior to release of AdoMet from the enzyme. This is S-adenosylmethionine synthase from Microcystis aeruginosa (strain NIES-843 / IAM M-2473).